The sequence spans 188 residues: D-glycero-beta-D-manno-heptose-1,7-bisphosphate 7-phosphatase (188 aa).

Cys-92, His-94, Cys-107, and Cys-109 together coordinate Zn(2+).

It belongs to the GmhB family.

The protein localises to the cytoplasm. It catalyses the reaction D-glycero-beta-D-manno-heptose 1,7-bisphosphate + H2O = D-glycero-beta-D-manno-heptose 1-phosphate + phosphate. The protein operates within nucleotide-sugar biosynthesis; ADP-L-glycero-beta-D-manno-heptose biosynthesis; ADP-L-glycero-beta-D-manno-heptose from D-glycero-beta-D-manno-heptose 7-phosphate: step 2/4. It participates in bacterial outer membrane biogenesis; LPS core biosynthesis. In terms of biological role, converts the D-glycero-beta-D-manno-heptose 1,7-bisphosphate intermediate into D-glycero-beta-D-manno-heptose 1-phosphate by removing the phosphate group at the C-7 position. The polypeptide is D-glycero-beta-D-manno-heptose-1,7-bisphosphate 7-phosphatase (gmhB1) (Photorhabdus laumondii subsp. laumondii (strain DSM 15139 / CIP 105565 / TT01) (Photorhabdus luminescens subsp. laumondii)).